The following is a 150-amino-acid chain: Retinal rod rhodopsin-sensitive cGMP 3',5'-cyclic phosphodiesterase subunit delta (150 aa).

A required for association with membranes region spans residues Arg-144–Val-150.

The protein belongs to the PDE6D/unc-119 family. In terms of assembly, interacts with the prenylated catalytic subunits of PDE6, an oligomer composed of two catalytic chains (PDE6A and PDE6B) and two inhibitory chains (gamma); has no effect on enzyme activity but promotes the release of the prenylated enzyme from cell membrane. Interacts with prenylated GRK1 and GRK7. Interacts with prenylated Ras family members, including RAP2A and RAP2C. Interacts with prenylated RHEB and NRAS. Interacts with prenylated HRAS and KRAS. Interacts with RAB13 (prenylated form); dissociates RAB13 from membranes. Interacts with prenylated INPP5E. Interacts with RAB28 (prenylated form); the interaction promotes RAB28 delivery to the photoreceptor outer segments. Interacts with RPGR. Interacts with ARL2. Interacts with ARL3; the interaction occurs specifically with the GTP-bound form of ARL3. Interaction with ARL2 and ARL3 promotes release of farnesylated cargo proteins. As to expression, widely expressed. Detected in various tissues including spleen, prostate gland, testis, ovary, small intestine, colon, retina, and peripheral blood.

The protein resides in the cytoplasm. It localises to the cytosol. Its subcellular location is the cytoplasmic vesicle membrane. It is found in the cytoskeleton. The protein localises to the cilium basal body. Functionally, promotes the release of prenylated target proteins from cellular membranes. Modulates the activity of prenylated or palmitoylated Ras family members by regulating their subcellular location. Required for normal ciliary targeting of farnesylated target proteins, such as INPP5E. Required for RAB28 localization to the cone cell outer segments in the retina. Modulates the subcellular location of target proteins by acting as a GTP specific dissociation inhibitor (GDI). Increases the affinity of ARL3 for GTP by several orders of magnitude. Stabilizes ARL3-GTP by decreasing the nucleotide dissociation rate. This chain is Retinal rod rhodopsin-sensitive cGMP 3',5'-cyclic phosphodiesterase subunit delta (PDE6D), found in Homo sapiens (Human).